The following is a 322-amino-acid chain: NADH-cytochrome b5 reductase 2 (322 aa).

A helical transmembrane segment spans residues leucine 32–leucine 48. The FAD-binding FR-type domain maps to glutamine 72 to glutamate 176. An FAD-binding site is contributed by lysine 179–leucine 214.

Belongs to the flavoprotein pyridine nucleotide cytochrome reductase family. The cofactor is FAD.

The protein localises to the mitochondrion outer membrane. It catalyses the reaction 2 Fe(III)-[cytochrome b5] + NADH = 2 Fe(II)-[cytochrome b5] + NAD(+) + H(+). Its function is as follows. May mediate the reduction of outer membrane cytochrome b5. The chain is NADH-cytochrome b5 reductase 2 (mcr1) from Aspergillus clavatus (strain ATCC 1007 / CBS 513.65 / DSM 816 / NCTC 3887 / NRRL 1 / QM 1276 / 107).